The primary structure comprises 84 residues: Putative membrane protein insertion efficiency factor (84 aa).

It belongs to the UPF0161 family.

Its subcellular location is the cell inner membrane. Functionally, could be involved in insertion of integral membrane proteins into the membrane. This Shewanella oneidensis (strain ATCC 700550 / JCM 31522 / CIP 106686 / LMG 19005 / NCIMB 14063 / MR-1) protein is Putative membrane protein insertion efficiency factor.